The sequence spans 677 residues: MSSSSSHFSSTAADLLAVFSSDNKDKSANKRISALKKAIAGISYGYDMSSLFPSVISSMESNNLELKKLCYLYLKIYASVKPTEAKRAVKLILNDIYSSNPMIRSLALRTLTSVNIKNFWVAAMDPIVRLLDDTDPYVRKTAAIGIAKLYSYDKKMVESSGLIDHLKEMLSDESSVVVANSLAALMNIVNSSTGFKLTFSREISNKLVKSLTDCSEWLQVAILDALIFYVPQKPGEAESFAERISPWLQHGNAAVCMGAVKVILYLTNYMKDDNRVKEYFMKTQPPLVTLLARKSSATQYVILRNIQIILEQCPEMFANDIHFFYCNFDDPIYVKLEKLDILTKIADIHNLDQILPEFVEYASEIDVELVRKSVKCIGYLAIKIEERKNDCIDSLIELMNTKVTYVIQEAVIVIRDILRKYPGSYKSLVPILYENLDSLDEPDAKSAVIWILGQYAEEIEDSITLLNDYLKGFFDEPLEIQLTLLTAVIKVFLKKPTAAADMVTNVLQWCTDEVNDPDLRDRGIIYSRMLSANPELAKKVILANMPPVNVGTGMYDPDTTEQLMLNISTLSSIYHKPPNRFVKGAQVAYCEPSPVLRLRTRDSNPSNTDSRESNHKKYNHFHQKSQTRRVMEQYDRNSWNPSPFSDESNSNTFSGKFDSADQENLGMPMTPETHLMD.

The segment at 597 to 677 (RLRTRDSNPS…PMTPETHLMD (81 aa)) is disordered. Basic residues predominate over residues 616-627 (KKYNHFHQKSQT). The segment covering 636-654 (RNSWNPSPFSDESNSNTFS) has biased composition (polar residues).

Belongs to the adaptor complexes large subunit family. Adaptor protein complex 2 (AP-2) is a heterotetramer composed of two large adaptins (alpha-type subunit apl3 and beta-type subunit apl1), a medium chain (mu-type subunit apm4) and a small adaptin (sigma-type subunit aps2).

It is found in the cell membrane. The protein resides in the membrane. Its subcellular location is the coated pit. Functionally, adaptins are components of the adaptor complexes which link clathrin to receptors in coated vesicles. Clathrin-associated protein complexes are believed to interact with the cytoplasmic tails of membrane proteins, leading to their selection and concentration. Beta adaptin is a subunit of the plasma membrane adaptor. In Schizosaccharomyces pombe (strain 972 / ATCC 24843) (Fission yeast), this protein is AP-2 complex subunit beta (apl1).